Reading from the N-terminus, the 565-residue chain is Sulfite reductase [NADPH] hemoprotein beta-component (565 aa).

The [4Fe-4S] cluster site is built by Cys429, Cys435, Cys474, and Cys478. Cys478 contributes to the siroheme binding site.

This sequence belongs to the nitrite and sulfite reductase 4Fe-4S domain family. In terms of assembly, alpha(8)-beta(8). The alpha component is a flavoprotein, the beta component is a hemoprotein. Requires siroheme as cofactor. It depends on [4Fe-4S] cluster as a cofactor.

It catalyses the reaction hydrogen sulfide + 3 NADP(+) + 3 H2O = sulfite + 3 NADPH + 4 H(+). The protein operates within sulfur metabolism; hydrogen sulfide biosynthesis; hydrogen sulfide from sulfite (NADPH route): step 1/1. Functionally, component of the sulfite reductase complex that catalyzes the 6-electron reduction of sulfite to sulfide. This is one of several activities required for the biosynthesis of L-cysteine from sulfate. This Shewanella sp. (strain MR-4) protein is Sulfite reductase [NADPH] hemoprotein beta-component.